A 775-amino-acid polypeptide reads, in one-letter code: ATP-dependent RNA helicase DBP4 (775 aa).

Basic residues predominate over residues 1 to 12 (MVKSQRNGKKGA). Positions 1-30 (MVKSQRNGKKGAKVLSRKEKRQSEKEEMDS) are disordered. Positions 21–30 (RQSEKEEMDS) are enriched in basic and acidic residues. Positions 48–76 (KHFSDLPITQNTLRGLKECSFVSLTDIQK) match the Q motif motif. The 175-residue stretch at 79-253 (IPVALKGEDL…RLSLTNPKRI (175 aa)) folds into the Helicase ATP-binding domain. 92-99 (ARTGSGKT) contributes to the ATP binding site. Residues 201–204 (DEAD) carry the DEAD box motif. The region spanning 267–439 (SLDQYYVKVP…SIRPQLQSLC (173 aa)) is the Helicase C-terminal domain. The interval 633 to 760 (EEDFEKAGDA…SKYVEFEEPE (128 aa)) is disordered. The span at 637 to 671 (EKAGDAKQQKMEFVQKEQEAMKITDLADREVERQK) shows a compositional bias: basic and acidic residues. The span at 689–703 (EEWDDGSGMDGEDLP) shows a compositional bias: acidic residues. A compositionally biased stretch (basic and acidic residues) spans 704–716 (DLERDMEPTEAKP). The span at 723–732 (FDDDDDDNDG) shows a compositional bias: acidic residues.

It belongs to the DEAD box helicase family. DDX10/DBP4 subfamily. In terms of assembly, interacts with the U3 and U14 snoRNAs. Associates with pre-ribosomal complexes.

It is found in the nucleus. Its subcellular location is the nucleolus. The catalysed reaction is ATP + H2O = ADP + phosphate + H(+). Its function is as follows. ATP-dependent RNA helicase required for ribosome biogenesis. Involved in the release of U14 snoRNA in pre-ribosomal complexes. Required for pre-rRNA cleavage at site A2. In Lodderomyces elongisporus (strain ATCC 11503 / CBS 2605 / JCM 1781 / NBRC 1676 / NRRL YB-4239) (Yeast), this protein is ATP-dependent RNA helicase DBP4 (DBP4).